Consider the following 404-residue polypeptide: Cysteine desulfurase IscS (404 aa).

Residues 73 to 74, N153, Q181, and 201 to 203 contribute to the pyridoxal 5'-phosphate site; these read AT and SAH. At K204 the chain carries N6-(pyridoxal phosphate)lysine. Residue T241 coordinates pyridoxal 5'-phosphate. C327 serves as the catalytic Cysteine persulfide intermediate. Residue C327 participates in [2Fe-2S] cluster binding.

Belongs to the class-V pyridoxal-phosphate-dependent aminotransferase family. NifS/IscS subfamily. Homodimer. Forms a heterotetramer with IscU, interacts with other sulfur acceptors. The cofactor is pyridoxal 5'-phosphate.

The protein resides in the cytoplasm. It catalyses the reaction (sulfur carrier)-H + L-cysteine = (sulfur carrier)-SH + L-alanine. It participates in cofactor biosynthesis; iron-sulfur cluster biosynthesis. Its function is as follows. Master enzyme that delivers sulfur to a number of partners involved in Fe-S cluster assembly, tRNA modification or cofactor biosynthesis. Catalyzes the removal of elemental sulfur atoms from cysteine to produce alanine. Functions as a sulfur delivery protein for Fe-S cluster synthesis onto IscU, an Fe-S scaffold assembly protein, as well as other S acceptor proteins. This chain is Cysteine desulfurase IscS, found in Anaeromyxobacter dehalogenans (strain 2CP-C).